A 539-amino-acid polypeptide reads, in one-letter code: CTP synthase (539 aa).

An amidoligase domain region spans residues M1–I267. S13 is a binding site for CTP. Residue S13 coordinates UTP. Position 14-19 (S14–I19) interacts with ATP. Y54 is an L-glutamine binding site. D71 contacts ATP. Mg(2+) is bound by residues D71 and E141. CTP contacts are provided by residues D148–E150, K188–Q193, and K224. Residues K188–Q193 and K224 contribute to the UTP site. One can recognise a Glutamine amidotransferase type-1 domain in the interval K294–Q537. G356 contacts L-glutamine. C383 acts as the Nucleophile; for glutamine hydrolysis in catalysis. L-glutamine is bound by residues L384–Q387, E407, and R465. Active-site residues include H510 and E512.

The protein belongs to the CTP synthase family. As to quaternary structure, homotetramer.

The catalysed reaction is UTP + L-glutamine + ATP + H2O = CTP + L-glutamate + ADP + phosphate + 2 H(+). It catalyses the reaction L-glutamine + H2O = L-glutamate + NH4(+). The enzyme catalyses UTP + NH4(+) + ATP = CTP + ADP + phosphate + 2 H(+). It functions in the pathway pyrimidine metabolism; CTP biosynthesis via de novo pathway; CTP from UDP: step 2/2. Allosterically activated by GTP, when glutamine is the substrate; GTP has no effect on the reaction when ammonia is the substrate. The allosteric effector GTP functions by stabilizing the protein conformation that binds the tetrahedral intermediate(s) formed during glutamine hydrolysis. Inhibited by the product CTP, via allosteric rather than competitive inhibition. Catalyzes the ATP-dependent amination of UTP to CTP with either L-glutamine or ammonia as the source of nitrogen. Regulates intracellular CTP levels through interactions with the four ribonucleotide triphosphates. The protein is CTP synthase of Lactobacillus helveticus (strain DPC 4571).